The chain runs to 258 residues: 5'-nucleotidase SurE (258 aa).

The a divalent metal cation site is built by D9, D10, S40, and N95.

Belongs to the SurE nucleotidase family. Requires a divalent metal cation as cofactor.

The protein localises to the cytoplasm. The catalysed reaction is a ribonucleoside 5'-phosphate + H2O = a ribonucleoside + phosphate. Its function is as follows. Nucleotidase that shows phosphatase activity on nucleoside 5'-monophosphates. The protein is 5'-nucleotidase SurE of Nitratiruptor sp. (strain SB155-2).